A 419-amino-acid polypeptide reads, in one-letter code: Ubiquitin receptor RAD23c (419 aa).

In terms of domain architecture, Ubiquitin-like spans Met1–Pro79. A compositionally biased stretch (low complexity) spans Ala83–Val118. The tract at residues Ala83–Asp172 is disordered. Pro residues predominate over residues Ala119–Ala135. The segment covering Pro136–Pro146 has biased composition (low complexity). The region spanning Ser185–Gly228 is the UBA 1 domain. The interval Val235–Gly282 is disordered. The segment covering Ala245 to Pro270 has biased composition (low complexity). Positions Gly288 to Ile331 constitute an STI1 domain. Residues Thr372–His413 form the UBA 2 domain.

This sequence belongs to the RAD23 family. Interacts with 'Lys-48'-linked polyubiquitin chains via its both UBA domains. Interacts with RPN10 via its ubiquitin-like domain. As to expression, widely expressed in the whole plant.

It is found in the nucleus. Its subcellular location is the cytoplasm. May be involved in nucleotide excision repair. Binds and presumably selects ubiquitin-conjugates for destruction. Prefers multiubiquitin chains rather than single ubiquitins, with a binding affinity for 'Lys-48'-linked ubiquitin chains. Acts as a ubiquitin receptor that associates with the 26S proteasomal docking subunit RPN10 for the indirect recognition of ubiquitinated substrates of ubiquitin/26S proteasome-mediated proteolysis (UPP). Involved in UV tolerance in hypocotyls, specifically in dark conditions. The sequence is that of Ubiquitin receptor RAD23c from Arabidopsis thaliana (Mouse-ear cress).